The following is a 611-amino-acid chain: MNNQYNWNLEVLLNGKSLADNFTELKQLSEQEKALYDGGACFQTKAKFTEFLQLQEKIEVLENRYSNFLSNKHAENSLDKTINDALFQYEMFKSEHALVFVDFEKNLFKHEKVIRAYLQDPALKQYQRDFELVWRNKKHQIDPASQKLLAQISPAWNQADKIFNVLSTADLNLQPVVYKGKTYVINAVSDYQSLLENKDRGLREAAYKVWLEIYWPTRNTLSVSLVENYIQLETFAKLKKHPNYIAKTAFDDEIDVAFIDFVYEQVASFAPTFKAFQSLRKQIYKHVLKLDKAQPWDLSVPLFKASGDYTIEQAQTDALKILAPMGSEYLEVVKEAFRERWISWLPDKNKYTGAYSISNVKGLDHYFILMNFDKTRASLNTLVHELGHSVHSWYASKYQTQNLDPTIFYAEIASICNELLLCYHDIINYENRNPQQLIRSLMEQISHFFGATTRQLMFSQFEQDTLKLIQQNQKPDFKTLVEIYGKTAIKYQAANADAITKKLKQTKYQKSLAYITSIPHFYAGNFYVYKYAIGQVVGTLVGKKLSAGDSNMLAAYKRFLSSGSTLPPLETIKLLGIDLTQPEPWQEAHAELKRWIKLVQTAFKQLQHKKR.

His384 lines the Zn(2+) pocket. Residue Glu385 is part of the active site. His388 and His391 together coordinate Zn(2+).

This sequence belongs to the peptidase M3B family. Requires Zn(2+) as cofactor.

The protein is Oligoendopeptidase F homolog (pepF) of Mycoplasma pneumoniae (strain ATCC 29342 / M129 / Subtype 1) (Mycoplasmoides pneumoniae).